A 569-amino-acid chain; its full sequence is Urease subunit alpha (569 aa).

Residues G131–F569 enclose the Urease domain. Ni(2+) contacts are provided by H136, H138, and K218. Residue K218 is modified to N6-carboxylysine. H220 is a binding site for substrate. H247 and H273 together coordinate Ni(2+). Residue H321 is the Proton donor of the active site. Residue D361 coordinates Ni(2+).

The protein belongs to the metallo-dependent hydrolases superfamily. Urease alpha subunit family. As to quaternary structure, heterotrimer of UreA (gamma), UreB (beta) and UreC (alpha) subunits. Three heterotrimers associate to form the active enzyme. Requires Ni cation as cofactor. Carboxylation allows a single lysine to coordinate two nickel ions.

The protein localises to the cytoplasm. The enzyme catalyses urea + 2 H2O + H(+) = hydrogencarbonate + 2 NH4(+). It functions in the pathway nitrogen metabolism; urea degradation; CO(2) and NH(3) from urea (urease route): step 1/1. This is Urease subunit alpha from Rhizobium rhizogenes (strain K84 / ATCC BAA-868) (Agrobacterium radiobacter).